The following is a 309-amino-acid chain: Protoheme IX farnesyltransferase (309 aa).

Transmembrane regions (helical) follow at residues 35–55 (IGIV…AFYF), 64–84 (LHLV…SCAI), 114–134 (VLWL…MTTV), 135–155 (TAAV…TLWT), 161–181 (INTV…WTAV), 187–207 (IVPL…FLAL), 231–251 (MTKR…FYLF), 253–273 (LGVP…LLGL), and 289–309 (FVYS…ATLW).

The protein belongs to the UbiA prenyltransferase family. Protoheme IX farnesyltransferase subfamily. As to quaternary structure, interacts with CtaA.

It is found in the cell membrane. It catalyses the reaction heme b + (2E,6E)-farnesyl diphosphate + H2O = Fe(II)-heme o + diphosphate. Its pathway is porphyrin-containing compound metabolism; heme O biosynthesis; heme O from protoheme: step 1/1. Functionally, converts heme B (protoheme IX) to heme O by substitution of the vinyl group on carbon 2 of heme B porphyrin ring with a hydroxyethyl farnesyl side group. The polypeptide is Protoheme IX farnesyltransferase (Geobacillus kaustophilus (strain HTA426)).